The chain runs to 372 residues: Pyrimidine monooxygenase RutA (372 aa).

Residues 57 to 58, Asn123, Glu132, 148 to 149, and Ser198 each bind FMN; these read IK and RY.

Belongs to the NtaA/SnaA/DszA monooxygenase family. RutA subfamily.

It catalyses the reaction uracil + FMNH2 + NADH + O2 = (Z)-3-ureidoacrylate + FMN + NAD(+) + H2O + H(+). The enzyme catalyses thymine + FMNH2 + NADH + O2 = (Z)-2-methylureidoacrylate + FMN + NAD(+) + H2O + H(+). Its function is as follows. Catalyzes the pyrimidine ring opening between N-3 and C-4 by an unusual flavin hydroperoxide-catalyzed mechanism, adding oxygen atoms in the process to yield ureidoacrylate peracid, that immediately reacts with FMN forming ureidoacrylate and FMN-N(5)-oxide. The FMN-N(5)-oxide reacts spontaneously with NADH to produce FMN. Requires the flavin reductase RutF to regenerate FMN in vivo. The sequence is that of Pyrimidine monooxygenase RutA from Methylorubrum extorquens (strain PA1) (Methylobacterium extorquens).